The primary structure comprises 165 residues: Ribosome maturation factor RimM (165 aa).

The region spanning 94-165 (EDEFYIADLT…YVILNYQREA (72 aa)) is the PRC barrel domain.

It belongs to the RimM family. In terms of assembly, binds ribosomal protein uS19.

It localises to the cytoplasm. Functionally, an accessory protein needed during the final step in the assembly of 30S ribosomal subunit, possibly for assembly of the head region. Essential for efficient processing of 16S rRNA. May be needed both before and after RbfA during the maturation of 16S rRNA. It has affinity for free ribosomal 30S subunits but not for 70S ribosomes. The chain is Ribosome maturation factor RimM from Rickettsia conorii (strain ATCC VR-613 / Malish 7).